Here is a 292-residue protein sequence, read N- to C-terminus: 31 kDa ribonucleoprotein, chloroplastic (292 aa).

The region spanning 88–166 (LKLFVGNLPF…RAIRVNAGPA (79 aa)) is the RRM 1 domain. The segment at 165–203 (PAPAKRENSSFGGGRGGNSSYGGGRDGNSSFGGARGGRS) is disordered. The tract at residues 167 to 207 (PAKRENSSFGGGRGGNSSYGGGRDGNSSFGGARGGRSVDSS) is linker (Gly-rich). Residues 175–190 (FGGGRGGNSSYGGGRD) show a composition bias toward gly residues. Positions 208 to 286 (NRVYVGNLSW…RSIRVSAAEE (79 aa)) constitute an RRM 2 domain.

As to expression, expressed at high levels in the leaves and seedlings, and lower levels are seen in the stems and roots.

It is found in the plastid. Its subcellular location is the chloroplast. In Nicotiana plumbaginifolia (Leadwort-leaved tobacco), this protein is 31 kDa ribonucleoprotein, chloroplastic.